A 250-amino-acid chain; its full sequence is tRNA (guanine-N(1)-)-methyltransferase (250 aa).

Residues glycine 116 and 136 to 141 (IGDYVL) contribute to the S-adenosyl-L-methionine site.

It belongs to the RNA methyltransferase TrmD family. Homodimer.

Its subcellular location is the cytoplasm. The catalysed reaction is guanosine(37) in tRNA + S-adenosyl-L-methionine = N(1)-methylguanosine(37) in tRNA + S-adenosyl-L-homocysteine + H(+). Specifically methylates guanosine-37 in various tRNAs. The chain is tRNA (guanine-N(1)-)-methyltransferase from Stutzerimonas stutzeri (strain A1501) (Pseudomonas stutzeri).